Reading from the N-terminus, the 269-residue chain is Formamidopyrimidine-DNA glycosylase (269 aa).

Residue Pro-2 is the Schiff-base intermediate with DNA of the active site. Glu-3 (proton donor) is an active-site residue. Catalysis depends on Lys-58, which acts as the Proton donor; for beta-elimination activity. Positions 91, 110, and 150 each coordinate DNA. The segment at 235-269 adopts an FPG-type zinc-finger fold; sequence SVYGCENKTCHFCKSKIIKIVQNQRSTFYCRKCQT. Arg-259 functions as the Proton donor; for delta-elimination activity in the catalytic mechanism.

The protein belongs to the FPG family. Monomer. Zn(2+) is required as a cofactor.

The catalysed reaction is Hydrolysis of DNA containing ring-opened 7-methylguanine residues, releasing 2,6-diamino-4-hydroxy-5-(N-methyl)formamidopyrimidine.. It catalyses the reaction 2'-deoxyribonucleotide-(2'-deoxyribose 5'-phosphate)-2'-deoxyribonucleotide-DNA = a 3'-end 2'-deoxyribonucleotide-(2,3-dehydro-2,3-deoxyribose 5'-phosphate)-DNA + a 5'-end 5'-phospho-2'-deoxyribonucleoside-DNA + H(+). Its function is as follows. Involved in base excision repair of DNA damaged by oxidation or by mutagenic agents. Acts as a DNA glycosylase that recognizes and removes damaged bases. Has a preference for oxidized purines, such as 7,8-dihydro-8-oxoguanine (8-oxoG). Has AP (apurinic/apyrimidinic) lyase activity and introduces nicks in the DNA strand. Cleaves the DNA backbone by beta-delta elimination to generate a single-strand break at the site of the removed base with both 3'- and 5'-phosphates. The sequence is that of Formamidopyrimidine-DNA glycosylase from Ruthia magnifica subsp. Calyptogena magnifica.